The primary structure comprises 605 residues: Apoptosis-inducing factor 3 (605 aa).

The span at 18–29 (VLPEKERGKEEL) shows a compositional bias: basic and acidic residues. A disordered region spans residues 18 to 44 (VLPEKERGKEELSASGKGSPRGYQGNG). One can recognise a Rieske domain in the interval 70 to 165 (ATVCHVKDLE…VKIEKEKVTI (96 aa)). [2Fe-2S] cluster-binding residues include C109, H111, C128, and H131. FAD contacts are provided by residues 201–205 (GAGAA), R235, K240, V270, D467, and W514.

This sequence belongs to the FAD-dependent oxidoreductase family.

It localises to the mitochondrion. Its function is as follows. Induces apoptosis through a caspase dependent pathway. Reduces mitochondrial membrane potential. The protein is Apoptosis-inducing factor 3 (Aifm3) of Mus musculus (Mouse).